Here is a 246-residue protein sequence, read N- to C-terminus: Carboxymethylenebutenolidase homolog (246 aa).

Residues cysteine 132, aspartate 179, and histidine 212 contribute to the active site.

This sequence belongs to the dienelactone hydrolase family.

It localises to the cytoplasm. The protein resides in the cytosol. Its function is as follows. Cysteine hydrolase. This is Carboxymethylenebutenolidase homolog (cmbl) from Xenopus tropicalis (Western clawed frog).